We begin with the raw amino-acid sequence, 498 residues long: MSLGMLSPHLNTPPPNNQGILIGDKVYSEVFLAIDNSIIPEDRLSTTPSMLDGLDHETETDLRILGCERIQSAGILLRLPQVAMATGQVIFQRFFFSKSFVKHNFEIVAMACVNLASKIEESPRRVRDVINVFHHLKQGKGKKSTPLILDQNYINTKNQVIKAERRILKELGFCVHVKHPHKIIVMYLQVLECEKNQMLVQTAWNYMNDALRTSAFVRFEPETIACACIYLAARVLQIPLPSKPHWFLLFGATKEDIKEICINTMKLYSREKPHSEQLERQVEKRKIFLEEARLKARGQNPNGTPALASINGFSPASKPSSPRDVKMDDKSPNSKLKEPENRQLFAKSPLNGSIKKEDGKVFQNGKNHSRSRSRSTSRSPHRHRRSHSGTYSSHSSHSPSPRQKARRPSPISQLRTDRDRPSETSRHSNKRRRSRSRSRSNSRERVRDRDHIKHKQERSGSGHHWDHRDRERDRSRDHGRNKRQSRSHSGHSHSRHRR.

Cyclin-like stretches follow at residues 68-169 and 182-266; these read ERIQ…RILK and KIIV…NTMK. Residues 294 to 498 form a disordered region; that stretch reads LKARGQNPNG…SGHSHSRHRR (205 aa). A compositionally biased stretch (polar residues) spans 311-320; it reads NGFSPASKPS. A compositionally biased stretch (basic and acidic residues) spans 321–341; that stretch reads SPRDVKMDDKSPNSKLKEPEN. Positions 366–396 are RS; it reads KNHSRSRSRSTSRSPHRHRRSHSGTYSSHSS. The segment covering 367 to 387 has biased composition (basic residues); sequence NHSRSRSRSTSRSPHRHRRSH. Low complexity predominate over residues 388–402; sequence SGTYSSHSSHSPSPR. 2 positions are modified to phosphoserine: Ser409 and Ser412. The span at 415 to 426 shows a compositional bias: basic and acidic residues; it reads RTDRDRPSETSR. A compositionally biased stretch (basic residues) spans 427–440; the sequence is HSNKRRRSRSRSRS. The segment covering 441-478 has biased composition (basic and acidic residues); that stretch reads NSRERVRDRDHIKHKQERSGSGHHWDHRDRERDRSRDH. The span at 479–498 shows a compositional bias: basic residues; that stretch reads GRNKRQSRSHSGHSHSRHRR.

The protein belongs to the cyclin family. Cyclin L subfamily.

It localises to the nucleus speckle. The protein resides in the nucleus. Its subcellular location is the nucleoplasm. Its function is as follows. Involved in pre-mRNA splicing. This chain is Cyclin-L1 (ccnl1), found in Danio rerio (Zebrafish).